A 279-amino-acid chain; its full sequence is Digeranylgeranylglyceryl phosphate synthase (279 aa).

Transmembrane regions (helical) follow at residues 14–34 (VKNC…ASNF), 36–56 (FGLI…CGFG), 94–114 (LMIS…IALI), 131–153 (IIGN…ASVG), 157–175 (ITLI…REII), 201–221 (IFVA…PYIL), 224–244 (FGAP…LAVL), and 259–279 (SKYI…GSLM).

It belongs to the UbiA prenyltransferase family. DGGGP synthase subfamily. It depends on Mg(2+) as a cofactor.

Its subcellular location is the cell membrane. It catalyses the reaction sn-3-O-(geranylgeranyl)glycerol 1-phosphate + (2E,6E,10E)-geranylgeranyl diphosphate = 2,3-bis-O-(geranylgeranyl)-sn-glycerol 1-phosphate + diphosphate. The protein operates within membrane lipid metabolism; glycerophospholipid metabolism. Functionally, prenyltransferase that catalyzes the transfer of the geranylgeranyl moiety of geranylgeranyl diphosphate (GGPP) to the C2 hydroxyl of (S)-3-O-geranylgeranylglyceryl phosphate (GGGP). This reaction is the second ether-bond-formation step in the biosynthesis of archaeal membrane lipids. This chain is Digeranylgeranylglyceryl phosphate synthase, found in Methanococcus aeolicus (strain ATCC BAA-1280 / DSM 17508 / OCM 812 / Nankai-3).